Here is a 162-residue protein sequence, read N- to C-terminus: Deoxyuridine 5'-triphosphate nucleotidohydrolase (162 aa).

S11 carries the phosphoserine modification. DUTP-binding positions include 83–85, 97–103, G108, R151, and 156–157; these read RSG, GVIDEDY, and FG.

Belongs to the dUTPase family. As to quaternary structure, homotrimer. Requires Mg(2+) as cofactor. Phosphorylated in vivo on Ser-11, a reaction that can be catalyzed in vitro by CDC2.

It is found in the nucleus. The enzyme catalyses dUTP + H2O = dUMP + diphosphate + H(+). It participates in pyrimidine metabolism; dUMP biosynthesis; dUMP from dCTP (dUTP route): step 2/2. Functionally, catalyzes the cleavage of 2'-deoxyuridine 5'-triphosphate (dUTP) into 2'-deoxyuridine 5'-monophosphate (dUMP) and inorganic pyrophosphate and through its action efficiently prevents uracil misincorporation into DNA and at the same time provides dUMP, the substrate for de novo thymidylate biosynthesis. Inhibits peroxisome proliferator-activated receptor (PPAR) activity by binding of its N-terminal to PPAR, preventing the latter's dimerization with retinoid X receptor. Essential for embryonic development. The polypeptide is Deoxyuridine 5'-triphosphate nucleotidohydrolase (Dut) (Mus musculus (Mouse)).